A 178-amino-acid chain; its full sequence is MEQYHGTTILSVRRGNSVAMGGDGQVTLGNIVIKATARKVRRLYNGRILAGFAGGTADAFTLFERFEAKLDKHQGNLLRSAVELAKDWRSDRALRRLEAMLSVADREVSLIITGNGDVLEPEQGIVAIGSGGSYAQSAARALLENTELAPRDIVTKSLEIAGDICIYTNRNFTLEVLE.

Residue Thr-7 is part of the active site. Na(+)-binding residues include Gly-162, Cys-165, and Thr-168.

The protein belongs to the peptidase T1B family. HslV subfamily. In terms of assembly, a double ring-shaped homohexamer of HslV is capped on each side by a ring-shaped HslU homohexamer. The assembly of the HslU/HslV complex is dependent on binding of ATP.

Its subcellular location is the cytoplasm. The enzyme catalyses ATP-dependent cleavage of peptide bonds with broad specificity.. With respect to regulation, allosterically activated by HslU binding. Its function is as follows. Protease subunit of a proteasome-like degradation complex believed to be a general protein degrading machinery. The polypeptide is ATP-dependent protease subunit HslV (Dechloromonas aromatica (strain RCB)).